The primary structure comprises 238 residues: Expansin-like protein 5 (238 aa).

The signal sequence occupies residues 1–21; sequence MRINFKLILIILTSFYGIINC. Residues 45 to 145 form the Expansin-like EG45 domain; the sequence is NGNCGFGKLT…VKVPCRVSGN (101 aa). 2 disulfide bridges follow: cysteine 48/cysteine 78 and cysteine 81/cysteine 140. A glycan (N-linked (GlcNAc...) asparagine) is linked at asparagine 89.

Belongs to the expansin family. Expansin A subfamily.

It is found in the secreted. May serve to lubricate the movement of the cellulose microfibrils during cell growth and wall extension and/or may serve to maintain the fluid state of the slug cell wall. This is Expansin-like protein 5 (expl5) from Dictyostelium discoideum (Social amoeba).